The following is a 318-amino-acid chain: NADH-ubiquinone oxidoreductase chain 1 (318 aa).

The next 8 helical transmembrane spans lie at 2–22, 69–89, 102–122, 146–166, 171–191, 231–251, 253–273, and 294–314; these read FMIN…FLTL, FMFT…WVPL, MLFI…SGWA, LAII…STLT, HLWL…STLA, IIMM…NPLL, EAHT…FLWV, and LPLT…LACI.

It belongs to the complex I subunit 1 family. As to quaternary structure, core subunit of respiratory chain NADH dehydrogenase (Complex I) which is composed of 45 different subunits.

It localises to the mitochondrion inner membrane. It carries out the reaction a ubiquinone + NADH + 5 H(+)(in) = a ubiquinol + NAD(+) + 4 H(+)(out). Core subunit of the mitochondrial membrane respiratory chain NADH dehydrogenase (Complex I) which catalyzes electron transfer from NADH through the respiratory chain, using ubiquinone as an electron acceptor. Essential for the catalytic activity and assembly of complex I. The chain is NADH-ubiquinone oxidoreductase chain 1 (MT-ND1) from Dugong dugon (Dugong).